A 435-amino-acid polypeptide reads, in one-letter code: Glutamyl-tRNA reductase (435 aa).

Residues 50-53 (TCNR), Ser110, 115-117 (ETQ), and Gln121 contribute to the substrate site. Cys51 acts as the Nucleophile in catalysis. 189-194 (GAGEMS) provides a ligand contact to NADP(+).

It belongs to the glutamyl-tRNA reductase family. In terms of assembly, homodimer.

The enzyme catalyses (S)-4-amino-5-oxopentanoate + tRNA(Glu) + NADP(+) = L-glutamyl-tRNA(Glu) + NADPH + H(+). It functions in the pathway porphyrin-containing compound metabolism; protoporphyrin-IX biosynthesis; 5-aminolevulinate from L-glutamyl-tRNA(Glu): step 1/2. Functionally, catalyzes the NADPH-dependent reduction of glutamyl-tRNA(Glu) to glutamate 1-semialdehyde (GSA). The protein is Glutamyl-tRNA reductase of Campylobacter lari (strain RM2100 / D67 / ATCC BAA-1060).